We begin with the raw amino-acid sequence, 430 residues long: Glutamate-1-semialdehyde 2,1-aminomutase (430 aa).

The residue at position 267 (Lys267) is an N6-(pyridoxal phosphate)lysine.

The protein belongs to the class-III pyridoxal-phosphate-dependent aminotransferase family. HemL subfamily. In terms of assembly, homodimer. Pyridoxal 5'-phosphate serves as cofactor.

Its subcellular location is the cytoplasm. The catalysed reaction is (S)-4-amino-5-oxopentanoate = 5-aminolevulinate. Its pathway is porphyrin-containing compound metabolism; protoporphyrin-IX biosynthesis; 5-aminolevulinate from L-glutamyl-tRNA(Glu): step 2/2. In Anaeromyxobacter dehalogenans (strain 2CP-C), this protein is Glutamate-1-semialdehyde 2,1-aminomutase.